The chain runs to 133 residues: Secreted effector protein SteB (133 aa).

The protein localises to the secreted. The protein resides in the host cytoplasm. Effector proteins function to alter host cell physiology and promote bacterial survival in host tissues. The protein is Secreted effector protein SteB (steB) of Salmonella typhimurium (strain 14028s / SGSC 2262).